A 544-amino-acid polypeptide reads, in one-letter code: Chaperonin GroEL 1 (544 aa).

ATP is bound by residues 29–32, 86–90, glycine 413, 482–484, and aspartate 498; these read TLGP, DGTTT, and NVL.

Belongs to the chaperonin (HSP60) family. Forms a cylinder of 14 subunits composed of two heptameric rings stacked back-to-back. Interacts with the co-chaperonin GroES.

Its subcellular location is the cytoplasm. The catalysed reaction is ATP + H2O + a folded polypeptide = ADP + phosphate + an unfolded polypeptide.. Its function is as follows. Together with its co-chaperonin GroES, plays an essential role in assisting protein folding. The GroEL-GroES system forms a nano-cage that allows encapsulation of the non-native substrate proteins and provides a physical environment optimized to promote and accelerate protein folding. This chain is Chaperonin GroEL 1, found in Chloroflexus aurantiacus (strain ATCC 29366 / DSM 635 / J-10-fl).